The primary structure comprises 688 residues: Glycine--tRNA ligase beta subunit (688 aa).

This sequence belongs to the class-II aminoacyl-tRNA synthetase family. Tetramer of two alpha and two beta subunits.

It is found in the cytoplasm. It catalyses the reaction tRNA(Gly) + glycine + ATP = glycyl-tRNA(Gly) + AMP + diphosphate. This is Glycine--tRNA ligase beta subunit from Shewanella sp. (strain MR-4).